A 120-amino-acid chain; its full sequence is Protein crumbs homolog 3 (120 aa).

A signal peptide spans 1–26 (MANPGLGLLLALGLPFLLARWGRAWG). At 27 to 59 (QIQTTSANENSTVLPSSTSSSSDGNLRPEAITA) the chain is on the extracellular side. Asn-36 carries an N-linked (GlcNAc...) asparagine glycan. A helical transmembrane segment spans residues 60–80 (IIVVFSLLAALLLAVGLALLV). The Cytoplasmic portion of the chain corresponds to 81 to 120 (RKLREKRQTEGTYRPSSEEQVGARVPPTPNLKLPPEERLI). An interaction with EPB41L5 region spans residues 84–120 (REKRQTEGTYRPSSEEQVGARVPPTPNLKLPPEERLI). A disordered region spans residues 87–120 (RQTEGTYRPSSEEQVGARVPPTPNLKLPPEERLI). Residues 90 to 99 (EGTYRPSSEE) show a composition bias toward polar residues. Residues 117 to 120 (ERLI) carry the PDZ-binding motif.

In terms of assembly, component of a complex composed of CRB3, PALS1 and PATJ. Interacts (via C-terminus) with PALS1 (via PDZ domain). Interacts with PARD6A. Interacts (via intracellular domain) with EPB41L5. Interacts with WDR83. Preferentially expressed in epithelial tissues. Expressed at high levels in lung, kidney, and colon. Expressed at high levels in retina, colon and mammary glands. Moderately expressed in liver, spleen, pancreas and prostate. Moderately to weakly expressed in the placenta. Weakly expressed in skeletal muscle and small intestine.

It localises to the apical cell membrane. Its subcellular location is the cell junction. The protein localises to the tight junction. Involved in the establishment of cell polarity in mammalian epithelial cells. Regulates the morphogenesis of tight junctions. Involved in promoting phosphorylation and cytoplasmic retention of transcriptional coactivators YAP1 and WWTR1/TAZ which leads to suppression of TGFB1-dependent transcription of target genes such as CCN2/CTGF, SERPINE1/PAI1, SNAI1/SNAIL1 and SMAD7. This is Protein crumbs homolog 3 from Homo sapiens (Human).